The chain runs to 220 residues: Small ribosomal subunit protein uS3 (220 aa).

The KH type-2 domain occupies 38–106 (IRNFINKKLQ…QVHINIVEIK (69 aa)).

This sequence belongs to the universal ribosomal protein uS3 family. As to quaternary structure, part of the 30S ribosomal subunit. Forms a tight complex with proteins S10 and S14.

In terms of biological role, binds the lower part of the 30S subunit head. Binds mRNA in the 70S ribosome, positioning it for translation. The chain is Small ribosomal subunit protein uS3 from Lacticaseibacillus paracasei (strain ATCC 334 / BCRC 17002 / CCUG 31169 / CIP 107868 / KCTC 3260 / NRRL B-441) (Lactobacillus paracasei).